The sequence spans 390 residues: Ribonuclease D (390 aa).

The region spanning I7 to L173 is the 3'-5' exonuclease domain. The 82-residue stretch at K212 to E293 folds into the HRDC domain.

Belongs to the RNase D family. A divalent metal cation is required as a cofactor.

It is found in the cytoplasm. The enzyme catalyses Exonucleolytic cleavage that removes extra residues from the 3'-terminus of tRNA to produce 5'-mononucleotides.. Exonuclease involved in the 3' processing of various precursor tRNAs. Initiates hydrolysis at the 3'-terminus of an RNA molecule and releases 5'-mononucleotides. This is Ribonuclease D from Zymomonas mobilis subsp. mobilis (strain ATCC 31821 / ZM4 / CP4).